Here is a 308-residue protein sequence, read N- to C-terminus: Aspartate carbamoyltransferase catalytic subunit (308 aa).

Carbamoyl phosphate contacts are provided by arginine 59 and threonine 60. Lysine 87 lines the L-aspartate pocket. 3 residues coordinate carbamoyl phosphate: arginine 109, histidine 137, and glutamine 140. Residues arginine 170 and arginine 224 each coordinate L-aspartate. 2 residues coordinate carbamoyl phosphate: glycine 265 and proline 266.

Belongs to the aspartate/ornithine carbamoyltransferase superfamily. ATCase family. In terms of assembly, heterododecamer (2C3:3R2) of six catalytic PyrB chains organized as two trimers (C3), and six regulatory PyrI chains organized as three dimers (R2).

It catalyses the reaction carbamoyl phosphate + L-aspartate = N-carbamoyl-L-aspartate + phosphate + H(+). The protein operates within pyrimidine metabolism; UMP biosynthesis via de novo pathway; (S)-dihydroorotate from bicarbonate: step 2/3. Functionally, catalyzes the condensation of carbamoyl phosphate and aspartate to form carbamoyl aspartate and inorganic phosphate, the committed step in the de novo pyrimidine nucleotide biosynthesis pathway. The protein is Aspartate carbamoyltransferase catalytic subunit of Flavobacterium johnsoniae (strain ATCC 17061 / DSM 2064 / JCM 8514 / BCRC 14874 / CCUG 350202 / NBRC 14942 / NCIMB 11054 / UW101) (Cytophaga johnsonae).